We begin with the raw amino-acid sequence, 368 residues long: Glutamate 5-kinase (368 aa).

Lys13 provides a ligand contact to ATP. Substrate contacts are provided by Ser54, Asp141, and Asn153. 173–174 (SD) provides a ligand contact to ATP. In terms of domain architecture, PUA spans 278–355 (KGSLRLDAGA…DEIPEILGYP (78 aa)).

This sequence belongs to the glutamate 5-kinase family.

The protein localises to the cytoplasm. The enzyme catalyses L-glutamate + ATP = L-glutamyl 5-phosphate + ADP. Its pathway is amino-acid biosynthesis; L-proline biosynthesis; L-glutamate 5-semialdehyde from L-glutamate: step 1/2. Functionally, catalyzes the transfer of a phosphate group to glutamate to form L-glutamate 5-phosphate. The chain is Glutamate 5-kinase from Jannaschia sp. (strain CCS1).